Here is a 314-residue protein sequence, read N- to C-terminus: Calcium homeostasis modulator protein 4 (314 aa).

Residues 1–14 (MCPTLNNIVSSLQR) lie on the Cytoplasmic side of the membrane. Residues 15–37 (NGIFINSLIAALTIGGQQLFSSS) form a helical membrane-spanning segment. At 38 to 48 (TFSCPCQVGKN) the chain is on the extracellular side. Disulfide bonds link cysteine 41/cysteine 131 and cysteine 43/cysteine 162. A helical membrane pass occupies residues 49–71 (FYYGSAFLVIPALILLVAGFALR). At 72 to 103 (SQMWTITGEYCCSCAPPYRRISPLECKLACLR) the chain is on the cytoplasmic side. Residues 104 to 129 (FFSITGRAVIAPLTWLAVTLLTGTYY) traverse the membrane as a helical segment. The Extracellular segment spans residues 130–183 (ECAASEFASVDHYPMFDNVSASKREEILAGFPCCRSAPSDVILVRDEIALLHRY). The chain crosses the membrane as a helical span at residues 184 to 207 (QSQMLGWILITLATIAALVSCCVA). Over 208–314 (KCCSPLTSLQ…DRSRGIELKP (107 aa)) the chain is Cytoplasmic.

Belongs to the CALHM family. In terms of assembly, oligomerizes to form decameric and undecameric channels. Two hemichannels can assemble in a tail-to-tail manner to form a gap junction. As to expression, placenta.

The protein localises to the cell membrane. Functionally, may assemble to form gap junction channel-like structures involved in intercellular communication. Channel gating and ion conductance are likely regulated by membrane lipids rather than by membrane depolarization or extracellular calcium levels. The protein is Calcium homeostasis modulator protein 4 of Homo sapiens (Human).